The chain runs to 251 residues: NADPH-dependent oxidoreductase (251 aa).

Belongs to the flavin oxidoreductase frp family. Requires FMN as cofactor.

Reduces FMN, organic nitro compounds and disulfide DTNB. Involved in maintenance of the cellular redox state and the disulfide stress response. The polypeptide is NADPH-dependent oxidoreductase (nfrA) (Staphylococcus aureus (strain bovine RF122 / ET3-1)).